The sequence spans 80 residues: Defensin-like protein 207 (80 aa).

A signal peptide spans 1-29 (MAKNLNSVSFIVLLLVLLVASTEILKSDA). 3 disulfides stabilise this stretch: C38–C64, C50–C75, and C54–C77.

The protein belongs to the DEFL family.

The protein localises to the secreted. The sequence is that of Defensin-like protein 207 from Arabidopsis thaliana (Mouse-ear cress).